Reading from the N-terminus, the 384-residue chain is Sialyltransferase-like protein 3 (384 aa).

At 1-5 (MKRRH) the chain is on the cytoplasmic side. A helical; Signal-anchor for type II membrane protein membrane pass occupies residues 6–26 (WSHPSCGLLLLVAVFCLLLVF). Residues 27–384 (RCSQLRHSGD…FRLPPVSFYR (358 aa)) lie on the Lumenal side of the membrane. N-linked (GlcNAc...) asparagine glycosylation is present at Asn241.

This sequence belongs to the glycosyltransferase 29 family.

The protein localises to the golgi apparatus membrane. In terms of biological role, possesses sialyltransferase-like activity in vitro. Transfers sialic acid to the glycoprotein asialofetuin. The transferred sialic acid is linked to galactose of Gal-beta-1,3-GalNAc through alpha-2,6-linkage. The sequence is that of Sialyltransferase-like protein 3 from Oryza sativa subsp. indica (Rice).